Here is a 323-residue protein sequence, read N- to C-terminus: tRNA N6-adenosine threonylcarbamoyltransferase (323 aa).

Fe cation contacts are provided by H105, H109, and Y126. Residues 126-130, D158, G171, E175, and N255 each bind substrate; that span reads YVSGG. Residue D283 coordinates Fe cation.

It belongs to the KAE1 / TsaD family. As to quaternary structure, monomer. Component of the KEOPS complex that consists of Kae1, Bud32, Cgi121 and Pcc1; the whole complex dimerizes. It depends on Fe(2+) as a cofactor.

It localises to the cytoplasm. It carries out the reaction L-threonylcarbamoyladenylate + adenosine(37) in tRNA = N(6)-L-threonylcarbamoyladenosine(37) in tRNA + AMP + H(+). Functionally, required for the formation of a threonylcarbamoyl group on adenosine at position 37 (t(6)A37) in tRNAs that read codons beginning with adenine. Is a component of the KEOPS complex that is probably involved in the transfer of the threonylcarbamoyl moiety of threonylcarbamoyl-AMP (TC-AMP) to the N6 group of A37. Kae1 likely plays a direct catalytic role in this reaction, but requires other protein(s) of the complex to fulfill this activity. The protein is tRNA N6-adenosine threonylcarbamoyltransferase of Archaeoglobus fulgidus (strain ATCC 49558 / DSM 4304 / JCM 9628 / NBRC 100126 / VC-16).